Here is a 344-residue protein sequence, read N- to C-terminus: Anamorsin homolog 1 (344 aa).

The interval 1-169 is N-terminal SAM-like domain; sequence MANNVGVLLA…DTGSVFQIRK (169 aa). The tract at residues 170 to 233 is linker; it reads KVSNQNGNFR…EDDLLTEEDL (64 aa). [2Fe-2S] cluster contacts are provided by C244, C251, C254, and C256. The tract at residues 244–256 is fe-S binding site A; the sequence is CAPTKKACKNCTC. The [4Fe-4S] cluster site is built by C282, C285, C293, and C296. 2 consecutive short sequence motifs (cx2C motif) follow at residues 282 to 285 and 293 to 296; these read CGSC and CAGC. The fe-S binding site B stretch occupies residues 282–296; it reads CGSCGLGDAFRCAGC.

This sequence belongs to the anamorsin family. Monomer. It depends on [2Fe-2S] cluster as a cofactor. Requires [4Fe-4S] cluster as cofactor.

Its subcellular location is the cytoplasm. The protein localises to the mitochondrion intermembrane space. Functionally, component of the cytosolic iron-sulfur (Fe-S) protein assembly (CIA) machinery. Required for the maturation of extramitochondrial Fe-S proteins. Part of an electron transfer chain functioning in an early step of cytosolic Fe-S biogenesis, facilitating the de novo assembly of a [4Fe-4S] cluster on the cytosolic Fe-S scaffold complex. Electrons are transferred from NADPH via a FAD- and FMN-containing diflavin oxidoreductase. Together with the diflavin oxidoreductase, also required for the assembly of the diferric tyrosyl radical cofactor of ribonucleotide reductase (RNR), probably by providing electrons for reduction during radical cofactor maturation in the catalytic small subunit. In Physcomitrium patens (Spreading-leaved earth moss), this protein is Anamorsin homolog 1.